Reading from the N-terminus, the 152-residue chain is Deoxyuridine 5'-triphosphate nucleotidohydrolase (152 aa).

Substrate contacts are provided by residues R71–G73, N84, L88–D90, and M98.

The protein belongs to the dUTPase family. Mg(2+) is required as a cofactor.

The catalysed reaction is dUTP + H2O = dUMP + diphosphate + H(+). The protein operates within pyrimidine metabolism; dUMP biosynthesis; dUMP from dCTP (dUTP route): step 2/2. Its function is as follows. This enzyme is involved in nucleotide metabolism: it produces dUMP, the immediate precursor of thymidine nucleotides and it decreases the intracellular concentration of dUTP so that uracil cannot be incorporated into DNA. The protein is Deoxyuridine 5'-triphosphate nucleotidohydrolase of Aeromonas hydrophila subsp. hydrophila (strain ATCC 7966 / DSM 30187 / BCRC 13018 / CCUG 14551 / JCM 1027 / KCTC 2358 / NCIMB 9240 / NCTC 8049).